The sequence spans 250 residues: 2,3-bisphosphoglycerate-dependent phosphoglycerate mutase (250 aa).

Substrate contacts are provided by residues 10–17 (RHGESQWN), 23–24 (TG), Arg62, 89–92 (ERHY), Lys100, 116–117 (RR), and 185–186 (GN). His11 (tele-phosphohistidine intermediate) is an active-site residue. The active-site Proton donor/acceptor is the Glu89.

This sequence belongs to the phosphoglycerate mutase family. BPG-dependent PGAM subfamily. As to quaternary structure, homodimer.

It catalyses the reaction (2R)-2-phosphoglycerate = (2R)-3-phosphoglycerate. Its pathway is carbohydrate degradation; glycolysis; pyruvate from D-glyceraldehyde 3-phosphate: step 3/5. In terms of biological role, catalyzes the interconversion of 2-phosphoglycerate and 3-phosphoglycerate. The chain is 2,3-bisphosphoglycerate-dependent phosphoglycerate mutase from Citrobacter koseri (strain ATCC BAA-895 / CDC 4225-83 / SGSC4696).